The following is a 501-amino-acid chain: Sucrose-6-phosphate hydrolase (501 aa).

Substrate-binding positions include 44–47 (LLND), Q63, 106–107 (YT), 167–168 (RD), and E222. D47 is an active-site residue.

Belongs to the glycosyl hydrolase 32 family.

It catalyses the reaction Hydrolysis of terminal non-reducing beta-D-fructofuranoside residues in beta-D-fructofuranosides.. It functions in the pathway glycan biosynthesis; sucrose metabolism. This chain is Sucrose-6-phosphate hydrolase (scrB), found in Pediococcus pentosaceus.